The chain runs to 388 residues: LL-diaminopimelate aminotransferase (388 aa).

Residues Y16 and G41 each contribute to the substrate site. Pyridoxal 5'-phosphate is bound by residues Y70, 104–105 (SK), Y129, N179, Y210, and 239–241 (SLS). Residues K105, Y129, and N179 each contribute to the substrate site. K242 bears the N6-(pyridoxal phosphate)lysine mark. R250 is a binding site for pyridoxal 5'-phosphate. R368 contributes to the substrate binding site.

Belongs to the class-I pyridoxal-phosphate-dependent aminotransferase family. LL-diaminopimelate aminotransferase subfamily. Homodimer. Requires pyridoxal 5'-phosphate as cofactor.

It catalyses the reaction (2S,6S)-2,6-diaminopimelate + 2-oxoglutarate = (S)-2,3,4,5-tetrahydrodipicolinate + L-glutamate + H2O + H(+). Its pathway is amino-acid biosynthesis; L-lysine biosynthesis via DAP pathway; LL-2,6-diaminopimelate from (S)-tetrahydrodipicolinate (aminotransferase route): step 1/1. Functionally, involved in the synthesis of meso-diaminopimelate (m-DAP or DL-DAP), required for both lysine and peptidoglycan biosynthesis. Catalyzes the direct conversion of tetrahydrodipicolinate to LL-diaminopimelate. The polypeptide is LL-diaminopimelate aminotransferase (Oleidesulfovibrio alaskensis (strain ATCC BAA-1058 / DSM 17464 / G20) (Desulfovibrio alaskensis)).